A 103-amino-acid polypeptide reads, in one-letter code: Small ribosomal subunit protein uS10 (103 aa).

This sequence belongs to the universal ribosomal protein uS10 family. In terms of assembly, part of the 30S ribosomal subunit.

Functionally, involved in the binding of tRNA to the ribosomes. This is Small ribosomal subunit protein uS10 from Thioalkalivibrio sulfidiphilus (strain HL-EbGR7).